Reading from the N-terminus, the 409-residue chain is Snake venom metalloproteinase BITM02A (409 aa).

Positions 1-20 (MIEVLLVTICLAAFPYQGSS) are cleaved as a signal peptide. The propeptide occupies 21–189 (IILESGNVND…KKASQSNLTP (169 aa)). A Peptidase M12B domain is found at 193–389 (RYIELFIVVD…ENPQCILNKR (197 aa)). Residues glutamate 196 and aspartate 280 each coordinate Ca(2+). Disulfide bonds link cysteine 304–cysteine 384, cysteine 344–cysteine 368, and cysteine 346–cysteine 351. Histidine 329 serves as a coordination point for Zn(2+). Glutamate 330 is a catalytic residue. Residues histidine 333 and histidine 339 each contribute to the Zn(2+) site. Cysteine 384, asparagine 387, valine 399, asparagine 402, leucine 404, glutamate 406, and glutamate 409 together coordinate Ca(2+). Residues 390–409 (LRTDTVSTPVSGNELLEAGE) constitute a propeptide that is removed on maturation.

It belongs to the venom metalloproteinase (M12B) family. P-I subfamily. As to quaternary structure, monomer. Zn(2+) serves as cofactor. As to expression, expressed by the venom gland.

It is found in the secreted. Its function is as follows. Snake venom metalloproteinase that impairs hemostasis in the envenomed animal. This chain is Snake venom metalloproteinase BITM02A, found in Bothrops insularis (Golden lancehead).